The following is a 142-amino-acid chain: Large ribosomal subunit protein uL11 (142 aa).

The protein belongs to the universal ribosomal protein uL11 family. As to quaternary structure, part of the ribosomal stalk of the 50S ribosomal subunit. Interacts with L10 and the large rRNA to form the base of the stalk. L10 forms an elongated spine to which L12 dimers bind in a sequential fashion forming a multimeric L10(L12)X complex. In terms of processing, one or more lysine residues are methylated.

Its function is as follows. Forms part of the ribosomal stalk which helps the ribosome interact with GTP-bound translation factors. The sequence is that of Large ribosomal subunit protein uL11 from Haemophilus influenzae (strain PittGG).